Here is a 1441-residue protein sequence, read N- to C-terminus: uncharacterized protein (1441 aa).

Disordered stretches follow at residues 1–95 (MGFL…EVIS), 150–204 (NGGI…QQQF), 224–289 (KPHQ…GEGE), 401–477 (HSNG…QLHQ), 529–661 (RHES…QPQQ), 680–760 (LNKD…KSQT), 776–810 (RKSS…HIQQ), 849–899 (QQQF…TQQL), 980–1118 (RGGS…DNNN), 1161–1185 (KSLK…NENN), 1209–1321 (NIES…YRSY), 1348–1402 (GHNS…HIFF), and 1421–1441 (LKFN…SILE). Low complexity predominate over residues 19–38 (NDNSFDGGSSSYNNNNNNNN). The segment covering 39 to 56 (QPITYTPTAIRSPNNKTM) has biased composition (polar residues). Low complexity-rich tracts occupy residues 57 to 91 (SQSQ…GNGN), 153 to 187 (ISQP…TTTP), 227 to 283 (QQQQ…SLQN), 416 to 445 (NNNN…GINN), 555 to 564 (GNTDGVNIDN), and 572 to 635 (NNNN…TNNT). A compositionally biased stretch (polar residues) spans 636–645 (ATPSVINGDS). Composition is skewed to low complexity over residues 648–661 (QEQP…QPQQ) and 680–700 (LNKD…DDNN). Residues 703 to 720 (SREEMENILKKSQQDSNK) are compositionally biased toward basic and acidic residues. A compositionally biased stretch (polar residues) spans 729 to 751 (EDSNSGSPTFQDFQSSAAASNVS). 2 stretches are compositionally biased toward low complexity: residues 780-810 (DSLN…HIQQ) and 849-880 (QQQF…NSGS). A compositionally biased stretch (gly residues) spans 881-892 (INGGSNSGGGGV). Residues 981-994 (GGSTNRTTPPFLTP) are compositionally biased toward polar residues. Residues 995-1067 (NTSQTNLSSL…NKQTANNTTN (73 aa)) show a composition bias toward low complexity. The span at 1068–1087 (DFSFDQNTDLRSSTNSLTIG) shows a compositional bias: polar residues. The span at 1088–1118 (SNSNFSSLKNSLNLENPENNNNPDKNVDNNN) shows a compositional bias: low complexity. 2 stretches are compositionally biased toward low complexity: residues 1225-1249 (DNNN…SLRN) and 1257-1291 (NISN…NNNE). Over residues 1362-1373 (RHKDSIGDKEMD) the composition is skewed to basic and acidic residues.

This is an uncharacterized protein from Dictyostelium discoideum (Social amoeba).